Consider the following 155-residue polypeptide: Ribosome maturation factor RimP (155 aa).

Belongs to the RimP family.

It localises to the cytoplasm. In terms of biological role, required for maturation of 30S ribosomal subunits. The sequence is that of Ribosome maturation factor RimP from Salinibacter ruber (strain DSM 13855 / M31).